A 250-amino-acid chain; its full sequence is tRNA (guanine-N(1)-)-methyltransferase (250 aa).

S-adenosyl-L-methionine contacts are provided by residues Gly113 and 134 to 139; that span reads IGDYVL.

It belongs to the RNA methyltransferase TrmD family. As to quaternary structure, homodimer.

It localises to the cytoplasm. The enzyme catalyses guanosine(37) in tRNA + S-adenosyl-L-methionine = N(1)-methylguanosine(37) in tRNA + S-adenosyl-L-homocysteine + H(+). Its function is as follows. Specifically methylates guanosine-37 in various tRNAs. The polypeptide is tRNA (guanine-N(1)-)-methyltransferase (Buchnera aphidicola subsp. Baizongia pistaciae (strain Bp)).